Here is a 402-residue protein sequence, read N- to C-terminus: Queuine tRNA-ribosyltransferase-like protein (402 aa).

It belongs to the queuine tRNA-ribosyltransferase family.

The chain is Queuine tRNA-ribosyltransferase-like protein from Theileria parva (East coast fever infection agent).